A 128-amino-acid polypeptide reads, in one-letter code: Sm-like protein LSM1A (128 aa).

A Sm domain is found at 10–85; it reads FFSTSLAAYL…VVLIGELDVE (76 aa).

The protein belongs to the snRNP Sm proteins family. As to quaternary structure, component of the heptameric LSM1-LSM7 complex that forms a seven-membered ring structure with a donut shape. The LSM subunits are arranged in the order LSM1, LSM2, LSM3, LSM6, LSM5, LSM7 and LSM4. LSM1A subunit interacts only with its two neighboring subunits, LSM2 and LSM4. In terms of tissue distribution, expressed in roots, leaves, stems, flowers and siliques.

The protein resides in the cytoplasm. It localises to the P-body. Functionally, component of the cytoplasmic LSM1-LSM7 complex which is involved in mRNA degradation by promoting decapping and leading to accurate 5'-3' mRNA decay. LSM1A and LSM1B are essential for the formation of the cytoplasmic LSM1-LSM7 complex which regulates developmental gene expression by the decapping of specific development-related transcripts. Required for P-body formation during heat stress. This is Sm-like protein LSM1A from Arabidopsis thaliana (Mouse-ear cress).